The following is a 143-amino-acid chain: Ribonuclease H (143 aa).

The 136-residue stretch at 1–136 folds into the RNase H type-1 domain; the sequence is MQEIEIFCDG…CDSLAKLEAQ (136 aa). Positions 9, 47, 69, and 128 each coordinate Mg(2+).

This sequence belongs to the RNase H family. Monomer. Requires Mg(2+) as cofactor.

It is found in the cytoplasm. It catalyses the reaction Endonucleolytic cleavage to 5'-phosphomonoester.. In terms of biological role, endonuclease that specifically degrades the RNA of RNA-DNA hybrids. The polypeptide is Ribonuclease H (Helicobacter pylori (strain HPAG1)).